The sequence spans 460 residues: Tol-Pal system protein TolB (460 aa).

The first 22 residues, 1–22 (MTIFQKSFILLIIWNFSLFAFS), serve as a signal peptide directing secretion.

It belongs to the TolB family. As to quaternary structure, the Tol-Pal system is composed of five core proteins: the inner membrane proteins TolA, TolQ and TolR, the periplasmic protein TolB and the outer membrane protein Pal. They form a network linking the inner and outer membranes and the peptidoglycan layer.

The protein resides in the periplasm. Functionally, part of the Tol-Pal system, which plays a role in outer membrane invagination during cell division and is important for maintaining outer membrane integrity. TolB occupies a key intermediary position in the Tol-Pal system because it communicates directly with both membrane-embedded components, Pal in the outer membrane and TolA in the inner membrane. The protein is Tol-Pal system protein TolB of Blochmanniella floridana.